The following is a 264-amino-acid chain: ATP synthase subunit a (264 aa).

7 consecutive transmembrane segments (helical) span residues W30–Y50, I90–I110, P111–P131, D134–I154, I177–L197, L208–V228, and L235–V255.

The protein belongs to the ATPase A chain family. As to quaternary structure, F-type ATPases have 2 components, CF(1) - the catalytic core - and CF(0) - the membrane proton channel. CF(1) has five subunits: alpha(3), beta(3), gamma(1), delta(1), epsilon(1). CF(0) has three main subunits: a(1), b(2) and c(9-12). The alpha and beta chains form an alternating ring which encloses part of the gamma chain. CF(1) is attached to CF(0) by a central stalk formed by the gamma and epsilon chains, while a peripheral stalk is formed by the delta and b chains.

It is found in the cell inner membrane. Functionally, key component of the proton channel; it plays a direct role in the translocation of protons across the membrane. The chain is ATP synthase subunit a from Shewanella frigidimarina (strain NCIMB 400).